Consider the following 197-residue polypeptide: Sodium/potassium-transporting ATPase subunit beta-1-interacting protein 3 (197 aa).

4 helical membrane passes run 2 to 22 (GCCTGRCSLICLCALQLVSAL), 35 to 55 (APILGNFLHIIVVILGLFGTI), 62 to 82 (IMVYTVWTALWVTWNVFIICF), and 152 to 172 (VQILLSLVGFVYACYVISISM).

The protein belongs to the NKAIN family. As to quaternary structure, interacts with ATP1B1.

The protein resides in the cell membrane. This chain is Sodium/potassium-transporting ATPase subunit beta-1-interacting protein 3 (NKAIN3), found in Homo sapiens (Human).